A 207-amino-acid chain; its full sequence is MLRSLVQNPRVRARVLERVDEFRLNNLSNEEVWFRELTLCLLTANSSFISAYQALNCLGDKIYYANEEVIRSILKSCKYRFYNLKAKYIIMAREKVYGKLKEEITPLADSDQQLAREKLLNIKGIGMKEASHFLRNVGYFDLAIIDRHLIDFMRRIGAIGETNVKHLSKSRYISLESVLKSIALNLNISVGILDLFIWYKETNTIVK.

Catalysis depends on residues Lys-128 and Asp-146.

Belongs to the type-2 OGG1 family.

It catalyses the reaction 2'-deoxyribonucleotide-(2'-deoxyribose 5'-phosphate)-2'-deoxyribonucleotide-DNA = a 3'-end 2'-deoxyribonucleotide-(2,3-dehydro-2,3-deoxyribose 5'-phosphate)-DNA + a 5'-end 5'-phospho-2'-deoxyribonucleoside-DNA + H(+). Its function is as follows. Catalyzes the excision of an oxidatively damaged form of guanine (7,8-dihydro-8-oxoguanine = 8-oxoG) from DNA. Also cleaves the DNA backbone at apurinic/apyrimidinic sites (AP sites). The polypeptide is 8-oxoguanine DNA glycosylase/AP lyase (Saccharolobus islandicus (strain L.S.2.15 / Lassen #1) (Sulfolobus islandicus)).